The primary structure comprises 533 residues: Peptidyl-prolyl cis-trans isomerase-like 2 (533 aa).

The U-box domain occupies Lys-38–Lys-111. Residues Lys-284 to Met-438 enclose the PPIase cyclophilin-type domain. The stretch at Phe-443–Lys-519 forms a coiled coil. The segment covering Leu-454–Met-477 has biased composition (basic and acidic residues). The tract at residues Leu-454–Phe-533 is disordered. Over residues Thr-523–Phe-533 the composition is skewed to polar residues.

It belongs to the cyclophilin-type PPIase family. PPIL2 subfamily.

The protein resides in the nucleus. It carries out the reaction [protein]-peptidylproline (omega=180) = [protein]-peptidylproline (omega=0). It catalyses the reaction S-ubiquitinyl-[E2 ubiquitin-conjugating enzyme]-L-cysteine + [acceptor protein]-L-lysine = [E2 ubiquitin-conjugating enzyme]-L-cysteine + N(6)-ubiquitinyl-[acceptor protein]-L-lysine.. The protein operates within protein modification; protein ubiquitination. Functionally, may catalyze the cis-trans isomerization of proline imidic peptide bonds in oligopeptides thereby assisting the folding of proteins. May also function as a chaperone, playing a role in intracellular transport of proteins. May also have a protein ubiquitin ligase activity acting as an E3 ubiquitin protein ligase or as a ubiquitin-ubiquitin ligase promoting elongation of ubiquitin chains on proteins. The chain is Peptidyl-prolyl cis-trans isomerase-like 2 (cyp14) from Rhizopus delemar (strain RA 99-880 / ATCC MYA-4621 / FGSC 9543 / NRRL 43880) (Mucormycosis agent).